Reading from the N-terminus, the 429-residue chain is Adenylosuccinate synthetase (429 aa).

GTP contacts are provided by residues 12–18 and 40–42; these read GDEGKGK and GHT. Residue aspartate 13 is the Proton acceptor of the active site. Positions 13 and 40 each coordinate Mg(2+). Residues 13–16, 38–41, threonine 128, arginine 142, glutamine 223, threonine 238, and arginine 302 each bind IMP; these read DEGK and NAGH. Histidine 41 serves as the catalytic Proton donor. 298–304 provides a ligand contact to substrate; the sequence is TTTGRPR. GTP contacts are provided by residues arginine 304, 330–332, and 412–414; these read SID and SVG.

This sequence belongs to the adenylosuccinate synthetase family. Homodimer. Mg(2+) is required as a cofactor.

The protein resides in the cytoplasm. It catalyses the reaction IMP + L-aspartate + GTP = N(6)-(1,2-dicarboxyethyl)-AMP + GDP + phosphate + 2 H(+). It functions in the pathway purine metabolism; AMP biosynthesis via de novo pathway; AMP from IMP: step 1/2. Its function is as follows. Plays an important role in the de novo pathway of purine nucleotide biosynthesis. Catalyzes the first committed step in the biosynthesis of AMP from IMP. The protein is Adenylosuccinate synthetase of Bacillus cereus (strain ATCC 14579 / DSM 31 / CCUG 7414 / JCM 2152 / NBRC 15305 / NCIMB 9373 / NCTC 2599 / NRRL B-3711).